The primary structure comprises 390 residues: Succinate--CoA ligase [ADP-forming] subunit beta (390 aa).

Positions K9–Q248 constitute an ATP-grasp domain. Residues K50, G57–G59, E103, I106, and E111 each bind ATP. Residues N203 and D217 each coordinate Mg(2+). Residues N268 and G325–V327 each bind substrate.

It belongs to the succinate/malate CoA ligase beta subunit family. Heterotetramer of two alpha and two beta subunits. The cofactor is Mg(2+).

It carries out the reaction succinate + ATP + CoA = succinyl-CoA + ADP + phosphate. The enzyme catalyses GTP + succinate + CoA = succinyl-CoA + GDP + phosphate. It functions in the pathway carbohydrate metabolism; tricarboxylic acid cycle; succinate from succinyl-CoA (ligase route): step 1/1. In terms of biological role, succinyl-CoA synthetase functions in the citric acid cycle (TCA), coupling the hydrolysis of succinyl-CoA to the synthesis of either ATP or GTP and thus represents the only step of substrate-level phosphorylation in the TCA. The beta subunit provides nucleotide specificity of the enzyme and binds the substrate succinate, while the binding sites for coenzyme A and phosphate are found in the alpha subunit. The chain is Succinate--CoA ligase [ADP-forming] subunit beta from Leptospira interrogans serogroup Icterohaemorrhagiae serovar copenhageni (strain Fiocruz L1-130).